A 450-amino-acid chain; its full sequence is Na(+)/H(+) antiporter NhaA 2 (450 aa).

Helical transmembrane passes span 43–63 (VGGA…NSPW), 86–106 (LTLG…VVGL), 124–144 (ALPM…FVAV), 155–175 (GWAI…AVIS), 185–205 (FLLT…AVFY), 208–228 (EINL…ALCV), 234–254 (SWWL…ESGV), 258–278 (VAGV…AGGP), 299–319 (VAVP…VSGL), 326–346 (PITL…IFLT), 364–384 (WIDV…SLLI), and 398–418 (FVKV…AVLL).

This sequence belongs to the NhaA Na(+)/H(+) (TC 2.A.33) antiporter family.

Its subcellular location is the cell membrane. The catalysed reaction is Na(+)(in) + 2 H(+)(out) = Na(+)(out) + 2 H(+)(in). Its function is as follows. Na(+)/H(+) antiporter that extrudes sodium in exchange for external protons. The chain is Na(+)/H(+) antiporter NhaA 2 from Mycobacterium sp. (strain KMS).